Consider the following 229-residue polypeptide: 2-C-methyl-D-erythritol 4-phosphate cytidylyltransferase (229 aa).

The protein belongs to the IspD/TarI cytidylyltransferase family. IspD subfamily.

It carries out the reaction 2-C-methyl-D-erythritol 4-phosphate + CTP + H(+) = 4-CDP-2-C-methyl-D-erythritol + diphosphate. It functions in the pathway isoprenoid biosynthesis; isopentenyl diphosphate biosynthesis via DXP pathway; isopentenyl diphosphate from 1-deoxy-D-xylulose 5-phosphate: step 2/6. In terms of biological role, catalyzes the formation of 4-diphosphocytidyl-2-C-methyl-D-erythritol from CTP and 2-C-methyl-D-erythritol 4-phosphate (MEP). The chain is 2-C-methyl-D-erythritol 4-phosphate cytidylyltransferase from Neisseria gonorrhoeae (strain ATCC 700825 / FA 1090).